We begin with the raw amino-acid sequence, 211 residues long: MNEGVHGEIHVADPSICRVSEASKETAVESVSRSVGATGDTAAVEFTAPSSAAIDDADEIFHHEQKTIYRVTHSFTEESRCACELIEGHGCPVRHLEADCGAVVLSFVAADLESFRDIVVNLKSAFDGVSLRRLTQSEPDSATGSLVFVDRDELTARQREVLETAHEMGYFEHPREANATEVAAALDINRSTFTEHLSAAQSKLLDTILDV.

In terms of domain architecture, HTH bat-type spans 154-205 (LTARQREVLETAHEMGYFEHPREANATEVAAALDINRSTFTEHLSAAQSKLL).

Functionally, activates transcription of the denitrifying genes (nitrate reductase narA and nitrite reductase nirK) under anaerobic conditions. In Haloferax volcanii (strain ATCC 29605 / DSM 3757 / JCM 8879 / NBRC 14742 / NCIMB 2012 / VKM B-1768 / DS2) (Halobacterium volcanii), this protein is Transcriptional regulator NarO.